Consider the following 277-residue polypeptide: Small ribosomal subunit protein uS2 (277 aa).

Positions Tyr228–Glu241 are enriched in basic and acidic residues. Residues Tyr228–Glu277 are disordered.

This sequence belongs to the universal ribosomal protein uS2 family.

This Syntrophus aciditrophicus (strain SB) protein is Small ribosomal subunit protein uS2.